A 303-amino-acid chain; its full sequence is Cell wall mannoprotein HSP150 (303 aa).

The N-terminal stretch at 1–18 (MQYKKTLVASALAATTLA) is a signal peptide. A propeptide spanning residues 19–72 (AYAPSEPWSTLTPTATYSGGVTDYASTFGIAVQPISTTSSASSAATTASSKAKR) is cleaved from the precursor. PIR1/2/3 repeat units follow at residues 71–89 (KRAA…TTTA) and 97–113 (AAAV…ATTK). A PIR1/2/3 3; degenerate repeat occupies 114 to 134 (TTAAASLKLVMVKIQATTKTT). 3 PIR1/2/3 repeats span residues 135-153 (AAAV…TKTT), 154-171 (AAAV…TTKT), and 172-190 (TQAA…SATS).

The protein belongs to the PIR protein family. In terms of processing, covalently linked to beta-1,3-glucan of the inner cell wall layer via an alkali-sensitive ester linkage between the gamma-carboxyl group of glutamic acids, arising from specific glutamines within the PIR1/2/3 repeats, and hydroxyl groups of glucoses of beta-1,3-glucan chains. The propeptide is cleaved off in the late Golgi. While both peptides are secreted, only a fraction of the mature glycoprotein is incorporated into the cell wall. Post-translationally, O-glycosylated. Extensively O-mannosylated.

Its subcellular location is the secreted. The protein localises to the cell wall. Its function is as follows. Component of the outer cell wall layer. Required for stability of the cell wall and for optimal growth. Required for resistance against several antifungal and cell wall-perturbing agents and for tolerance to heat shock. The polypeptide is Cell wall mannoprotein HSP150 (HSP150) (Saccharomyces cerevisiae (strain AWRI1631) (Baker's yeast)).